Reading from the N-terminus, the 556-residue chain is Polypeptide N-acetylgalactosaminyltransferase 13 (556 aa).

The Cytoplasmic portion of the chain corresponds to 1–4 (MRRF). Residues 5-27 (VYCKVVLATSLMWVLVDVFLLLY) traverse the membrane as a helical; Signal-anchor for type II membrane protein segment. Residues 28–556 (FSECNKCDDK…WLLRNMTLGT (529 aa)) are Lumenal-facing. N-linked (GlcNAc...) asparagine glycans are attached at residues N94 and N116. 5 cysteine pairs are disulfide-bonded: C105-C338, C329-C407, C441-C458, C481-C496, and C522-C539. A catalytic subdomain A region spans residues 114-224 (LPNTSVVIVF…LGWLEPLLAR (111 aa)). Residues D155 and R185 each coordinate substrate. Residues D208 and H210 each contribute to the Mn(2+) site. The interval 284-346 (PVRTPTMAGG…TCSHVGHVFR (63 aa)) is catalytic subdomain B. Position 315 (W315) interacts with substrate. H343 serves as a coordination point for Mn(2+). Residues R346 and Y351 each contribute to the substrate site. A Ricin B-type lectin domain is found at 428–550 (YSLGEIRNVE…GSRSQQWLLR (123 aa)). N551 carries N-linked (GlcNAc...) asparagine glycosylation.

The protein belongs to the glycosyltransferase 2 family. GalNAc-T subfamily. Mn(2+) serves as cofactor. In terms of tissue distribution, specifically expressed in neuronal cells. Not expressed in glial cells such as astrocytes. Expressed at low level.

The protein resides in the golgi apparatus membrane. The enzyme catalyses L-seryl-[protein] + UDP-N-acetyl-alpha-D-galactosamine = a 3-O-[N-acetyl-alpha-D-galactosaminyl]-L-seryl-[protein] + UDP + H(+). It carries out the reaction L-threonyl-[protein] + UDP-N-acetyl-alpha-D-galactosamine = a 3-O-[N-acetyl-alpha-D-galactosaminyl]-L-threonyl-[protein] + UDP + H(+). It participates in protein modification; protein glycosylation. In terms of biological role, catalyzes the initial reaction in O-linked oligosaccharide biosynthesis, the transfer of an N-acetyl-D-galactosamine (GalNAc) residue from UDP-GalNAc to a serine or threonine residue on the protein receptor. Generates GalNAc-O-Ser/Thr structure also known as Tn antigen, which itself is immunogenic but also serves as a precursor for the synthesis of different mucin-type O-glycan core structures. Contributes to the synthesis of O-linked glycans on mucins and proteoglycans of the central nervous system. Can glycosylate both unmodified peptides and glycopeptides that already contain an O-linked GalNAc sugar. Transfers GalNAc to Thr-/Ser-rich tandem repeats GTTPSPVPTTSTTSAP of MUC5AC. Transfers GalNAc to three consecutive serine/threonine residues on SDC3 forming a triplet-Tn epitope expressed in Purkinje cells of the developing brain. May promote neurogenesis through glycosylation and stabilization of PDPN. This is Polypeptide N-acetylgalactosaminyltransferase 13 (Galnt13) from Mus musculus (Mouse).